A 396-amino-acid polypeptide reads, in one-letter code: Acetate kinase (396 aa).

Asn-8 lines the Mg(2+) pocket. Lys-15 is a binding site for ATP. Arg-89 contributes to the substrate binding site. The active-site Proton donor/acceptor is the Asp-146. Residues 206–210 (HIGNG), 283–285 (DMR), and 331–335 (GVGEN) each bind ATP. Glu-383 is a binding site for Mg(2+).

This sequence belongs to the acetokinase family. In terms of assembly, homodimer. It depends on Mg(2+) as a cofactor. Mn(2+) serves as cofactor.

The protein localises to the cytoplasm. It catalyses the reaction acetate + ATP = acetyl phosphate + ADP. Its pathway is metabolic intermediate biosynthesis; acetyl-CoA biosynthesis; acetyl-CoA from acetate: step 1/2. Its function is as follows. Catalyzes the formation of acetyl phosphate from acetate and ATP. Can also catalyze the reverse reaction. This chain is Acetate kinase, found in Streptococcus pneumoniae serotype 2 (strain D39 / NCTC 7466).